The sequence spans 195 residues: uncharacterized protein (195 aa).

Residues Glu10–Gln70 form the HTH tetR-type domain. The segment at residues Ser33–Phe52 is a DNA-binding region (H-T-H motif).

This is an uncharacterized protein from Mycobacterium tuberculosis (strain CDC 1551 / Oshkosh).